The primary structure comprises 569 residues: Cationic amino acid transporter 5 (569 aa).

At 1-67 the chain is on the cytoplasmic side; sequence MEGEERGYWR…KQSEHEMKRC (67 aa). Residues 68 to 88 traverse the membrane as a helical segment; it reads LTWWDLVWFGFGSVIGAGIFV. Topologically, residues 89 to 97 are extracellular; the sequence is LTGQEAHEQ. A helical membrane pass occupies residues 98 to 118; sequence AGPAIVLSYVVSGLSAMLSVF. The Cytoplasmic segment spans residues 119 to 143; sequence CYTEFAVEIPVAGGSFAYLRIELGD. The helical transmembrane segment at 144 to 164 threads the bilayer; sequence FAAFITAGNILLESIVGTAAV. Over 165–192 the chain is Extracellular; it reads ARAWTSYFATLLNRSPNALRIKTDLSSG. A helical membrane pass occupies residues 193–213; that stretch reads FNLLDPIAVVVIAASATIASI. The Cytoplasmic segment spans residues 214-222; it reads STRKTSLLN. The helical transmembrane segment at 223–243 threads the bilayer; it reads WIASAINTLVIFFVIIAGFIH. Over 244–251 the chain is Extracellular; it reads ADTSNLTP. The helical transmembrane segment at 252–272 threads the bilayer; it reads FLPFGPEGVFRAAAVVYFAYG. At 273–290 the chain is on the cytoplasmic side; it reads GFDSIATMAEETKNPSRD. Residues 291-311 traverse the membrane as a helical segment; that stretch reads IPIGLLGSMSIITVIYCLMAL. The Extracellular segment spans residues 312–341; that stretch reads SLSMMQKYTDIDPNAAYSVAFQSVGMKWGK. Residues 342–362 traverse the membrane as a helical segment; sequence YLVALGALKGMTTVLLVGALG. At 363-389 the chain is on the cytoplasmic side; it reads QARYVTHIARTHMIPPIFALVHPKTGT. Residues 390 to 410 form a helical membrane-spanning segment; the sequence is PINANLLVAIPSALIAFFSGL. Asp411 is a topological domain (extracellular). The helical transmembrane segment at 412-432 threads the bilayer; the sequence is VLASLLSISTLFIFTMMPIAL. Residues 433–450 lie on the Cytoplasmic side of the membrane; the sequence is LVRRYYVRQDTPRVHLIK. Residues 451-471 traverse the membrane as a helical segment; it reads LITCLLFVVVSSMGTSAYWGM. At 472–477 the chain is on the extracellular side; sequence QRKGSW. Residues 478–498 traverse the membrane as a helical segment; it reads IGYTVTVPFWFLGTLGIVFFV. Over 499–505 the chain is Cytoplasmic; it reads PQQRTPK. The chain crosses the membrane as a helical span at residues 506 to 526; that stretch reads VWGVPLVPWLPCLSIATNIFL. Topologically, residues 527–537 are extracellular; the sequence is MGSLGAMAFVR. The chain crosses the membrane as a helical span at residues 538 to 558; that stretch reads FGVCTLAMLLYYFLLGLHATF. At 559–569 the chain is on the cytoplasmic side; the sequence is DMAHQQIVPRT.

The protein belongs to the amino acid-polyamine-organocation (APC) superfamily. Cationic amino acid transporter (CAT) (TC 2.A.3.3) family. As to expression, expressed in roots, stems, flowers, seeds, and leaves. Mostly present in leaf rims and cotyledons of developing seedlings.

It localises to the cell membrane. High-affinity permease involved in the transport of the cationic amino acids (e.g. arginine, and, to a lower extent, citrulline and glutamate). Transport mostly basic amino acids, and, to a lower extent neutral and acidic amino acids. This Arabidopsis thaliana (Mouse-ear cress) protein is Cationic amino acid transporter 5 (CAT5).